Reading from the N-terminus, the 121-residue chain is UPF0738 protein BLi01253/BL05110 (121 aa).

Belongs to the UPF0738 family.

This Bacillus licheniformis (strain ATCC 14580 / DSM 13 / JCM 2505 / CCUG 7422 / NBRC 12200 / NCIMB 9375 / NCTC 10341 / NRRL NRS-1264 / Gibson 46) protein is UPF0738 protein BLi01253/BL05110.